A 749-amino-acid polypeptide reads, in one-letter code: Phosphate-regulating neutral endopeptidase PHEX (749 aa).

Over 1–20 the chain is Cytoplasmic; that stretch reads MEAETGSTMETGKGTNRGIR. A helical; Signal-anchor for type II membrane protein membrane pass occupies residues 21 to 37; sequence IALALFIGGTLVLGTLL. The Extracellular segment spans residues 38–749; that stretch reads FLVSQGLLSF…NRGADSCRLW (712 aa). One can recognise a Peptidase M13 domain in the interval 53-749; sequence YCLKPECIEA…NRGADSCRLW (697 aa). An intrachain disulfide couples cysteine 54 to cysteine 59. Asparagine 71, asparagine 238, asparagine 263, asparagine 290, asparagine 301, asparagine 377, and asparagine 484 each carry an N-linked (GlcNAc...) asparagine glycan. Disulfide bonds link cysteine 77–cysteine 733, cysteine 85–cysteine 693, cysteine 142–cysteine 406, and cysteine 617–cysteine 746. Histidine 580 provides a ligand contact to Zn(2+). Glutamate 581 is an active-site residue. The Zn(2+) site is built by histidine 584 and glutamate 642. Aspartate 646 (proton donor) is an active-site residue. An N-linked (GlcNAc...) asparagine glycan is attached at asparagine 736.

This sequence belongs to the peptidase M13 family. Interacts with MEPE; the interaction is zinc-dependent (via ASARM motif). Zn(2+) is required as a cofactor. N-glycosylated. In terms of tissue distribution, expressed in bone, specifically in the osteoid and in osteocytes. Expressed in teeth, specifically in odontoblasts and ameloblasts. Expressed moderately by macrophages in the liver and has minimal expression in brown adipose tissue. Also expressed in suprabasal layers of the skin.

It localises to the cell membrane. Functionally, peptidase that cleaves SIBLING (small integrin-binding ligand, N-linked glycoprotein)-derived ASARM peptides, thus regulating their biological activity. Cleaves ASARM peptides between Ser and Glu or Asp residues. Regulates osteogenic cell differentiation and bone mineralization through the cleavage of the MEPE-derived ASARM peptide. Promotes dentin mineralization and renal phosphate reabsorption by cleaving DMP1- and MEPE-derived ASARM peptides. Inhibits the cleavage of MEPE by CTSB/cathepsin B thus preventing MEPE degradation. The sequence is that of Phosphate-regulating neutral endopeptidase PHEX (Phex) from Mus musculus (Mouse).